Here is a 200-residue protein sequence, read N- to C-terminus: ATP-dependent Clp protease proteolytic subunit (200 aa).

S103 serves as the catalytic Nucleophile. The active site involves H128.

It belongs to the peptidase S14 family. Fourteen ClpP subunits assemble into 2 heptameric rings which stack back to back to give a disk-like structure with a central cavity, resembling the structure of eukaryotic proteasomes.

The protein localises to the cytoplasm. It carries out the reaction Hydrolysis of proteins to small peptides in the presence of ATP and magnesium. alpha-casein is the usual test substrate. In the absence of ATP, only oligopeptides shorter than five residues are hydrolyzed (such as succinyl-Leu-Tyr-|-NHMec, and Leu-Tyr-Leu-|-Tyr-Trp, in which cleavage of the -Tyr-|-Leu- and -Tyr-|-Trp bonds also occurs).. Cleaves peptides in various proteins in a process that requires ATP hydrolysis. Has a chymotrypsin-like activity. Plays a major role in the degradation of misfolded proteins. The chain is ATP-dependent Clp protease proteolytic subunit from Vibrio cholerae serotype O1 (strain ATCC 39541 / Classical Ogawa 395 / O395).